Reading from the N-terminus, the 200-residue chain is Large ribosomal subunit protein uL4c (200 aa).

Residues Arg45–Ser71 are disordered. Residues Gly51 to Ser68 show a composition bias toward basic residues.

The protein belongs to the universal ribosomal protein uL4 family. In terms of assembly, part of the 50S ribosomal subunit.

It localises to the plastid. It is found in the chloroplast. Functionally, probably binds the 23S rRNA. This chain is Large ribosomal subunit protein uL4c (rpl4), found in Cyanidioschyzon merolae (strain NIES-3377 / 10D) (Unicellular red alga).